Here is a 405-residue protein sequence, read N- to C-terminus: Acetate kinase (405 aa).

A Mg(2+)-binding site is contributed by asparagine 7. An ATP-binding site is contributed by lysine 14. Substrate is bound at residue arginine 99. Aspartate 156 (proton donor/acceptor) is an active-site residue. Residues 215–219, 290–292, and 338–342 each bind ATP; these read HLGNG, DMR, and GVGEH. Glutamate 391 lines the Mg(2+) pocket.

The protein belongs to the acetokinase family. Homodimer. Mg(2+) is required as a cofactor. It depends on Mn(2+) as a cofactor.

It is found in the cytoplasm. The catalysed reaction is acetate + ATP = acetyl phosphate + ADP. It participates in metabolic intermediate biosynthesis; acetyl-CoA biosynthesis; acetyl-CoA from acetate: step 1/2. Functionally, catalyzes the formation of acetyl phosphate from acetate and ATP. Can also catalyze the reverse reaction. This is Acetate kinase from Nostoc punctiforme (strain ATCC 29133 / PCC 73102).